The primary structure comprises 188 residues: Protein GrpE (188 aa).

The segment at 1 to 30 (MTKKTSHHKAEQKEKRAGEESGRESEVLDH) is disordered. Positions 8 to 30 (HKAEQKEKRAGEESGRESEVLDH) are enriched in basic and acidic residues.

This sequence belongs to the GrpE family. Homodimer.

The protein resides in the cytoplasm. Participates actively in the response to hyperosmotic and heat shock by preventing the aggregation of stress-denatured proteins, in association with DnaK and GrpE. It is the nucleotide exchange factor for DnaK and may function as a thermosensor. Unfolded proteins bind initially to DnaJ; upon interaction with the DnaJ-bound protein, DnaK hydrolyzes its bound ATP, resulting in the formation of a stable complex. GrpE releases ADP from DnaK; ATP binding to DnaK triggers the release of the substrate protein, thus completing the reaction cycle. Several rounds of ATP-dependent interactions between DnaJ, DnaK and GrpE are required for fully efficient folding. The polypeptide is Protein GrpE (Chlorobium phaeobacteroides (strain BS1)).